A 45-amino-acid polypeptide reads, in one-letter code: Myotoxin-2 (45 aa).

3 cysteine pairs are disulfide-bonded: C4–C36, C11–C30, and C18–C37.

The protein belongs to the crotamine-myotoxin family. Monomer. In terms of tissue distribution, expressed by the venom gland.

It is found in the secreted. Its function is as follows. Cationic peptide that possesses multiple functions. It acts as a cell-penetrating peptide (CPP), and as a potent voltage-gated potassium channel (Kv) inhibitor. It exhibits antimicrobial activities, hind limb paralysis, and severe muscle necrosis by a non-enzymatic mechanism. In Crotalus viridis viridis (Prairie rattlesnake), this protein is Myotoxin-2.